Here is a 226-residue protein sequence, read N- to C-terminus: Ribonuclease 3 (226 aa).

One can recognise an RNase III domain in the interval 6-128 (INRLQRKLGY…LIGGIFLDSD (123 aa)). Glutamate 41 contacts Mg(2+). Aspartate 45 is a catalytic residue. Residues aspartate 114 and glutamate 117 each contribute to the Mg(2+) site. Glutamate 117 is a catalytic residue. The region spanning 155 to 225 (DPKTRLQEFL…AEQALKKLEL (71 aa)) is the DRBM domain.

The protein belongs to the ribonuclease III family. In terms of assembly, homodimer. Requires Mg(2+) as cofactor.

It is found in the cytoplasm. It carries out the reaction Endonucleolytic cleavage to 5'-phosphomonoester.. Its function is as follows. Digests double-stranded RNA. Involved in the processing of primary rRNA transcript to yield the immediate precursors to the large and small rRNAs (23S and 16S). Processes some mRNAs, and tRNAs when they are encoded in the rRNA operon. Processes pre-crRNA and tracrRNA of type II CRISPR loci if present in the organism. This chain is Ribonuclease 3, found in Pectobacterium carotovorum subsp. carotovorum (strain PC1).